Reading from the N-terminus, the 424-residue chain is Gamma-glutamyl phosphate reductase (424 aa).

It belongs to the gamma-glutamyl phosphate reductase family.

The protein resides in the cytoplasm. The catalysed reaction is L-glutamate 5-semialdehyde + phosphate + NADP(+) = L-glutamyl 5-phosphate + NADPH + H(+). The protein operates within amino-acid biosynthesis; L-proline biosynthesis; L-glutamate 5-semialdehyde from L-glutamate: step 2/2. Catalyzes the NADPH-dependent reduction of L-glutamate 5-phosphate into L-glutamate 5-semialdehyde and phosphate. The product spontaneously undergoes cyclization to form 1-pyrroline-5-carboxylate. The chain is Gamma-glutamyl phosphate reductase from Shewanella sediminis (strain HAW-EB3).